The primary structure comprises 707 residues: UvrABC system protein C (707 aa).

Residues 14 to 94 (AEPGCYLMKD…IKKHRPRFNV (81 aa)) form the GIY-YIG domain. The 36-residue stretch at 206-241 (GELVERLRGRMAGAAEGLRFEEAARLRDQLQAVERS) folds into the UVR domain. The disordered stretch occupies residues 655 to 707 (DAPPIAADEPSGAPAGAPGGGPAEASPEAVAAATEAEIDAALADEDASPEPAA). Low complexity-rich tracts occupy residues 660–670 (AADEPSGAPAG) and 677–689 (AEASPEAVAAATE). The span at 690–707 (AEIDAALADEDASPEPAA) shows a compositional bias: acidic residues.

Belongs to the UvrC family. As to quaternary structure, interacts with UvrB in an incision complex.

The protein localises to the cytoplasm. In terms of biological role, the UvrABC repair system catalyzes the recognition and processing of DNA lesions. UvrC both incises the 5' and 3' sides of the lesion. The N-terminal half is responsible for the 3' incision and the C-terminal half is responsible for the 5' incision. This chain is UvrABC system protein C, found in Anaeromyxobacter dehalogenans (strain 2CP-1 / ATCC BAA-258).